The chain runs to 445 residues: MGSSANTETNGNAPPPSSNQKPPATNGVDGSHPPPPPLTPDQAIIESDPSKKRKMGMLPLEVGTRVMCRWRDGKHHPVKVIERRRIHNGGQNDYEYYVHYTEFNRRLDEWTQLDQLDLDSVECAVDEKVEDKVTSLKMTRHQKRKIDETHIEGHEELDAASLREHEEFTKVKNISTIELGKYEIETWYFSPFPPEYNDCVKLFFCEFCLNFMKRKEQLQRHMRKCDLKHPPGDEIYRSGTLSMFEVDGKKNKVYAQNLCYLAKLFLDHKTLYYDVDLFLFYVLCECDDRGCHMVGYFSKEKHSEEAYNLACILTLPSYQRKGYGKFLIAFSYELSKKEGKVGTPERPLSDLGLLSYRGYWTRVLLEILKKHKGNISIKELSDVTAIKAEDILSTLQSLELIQYRKGQHVICADPKVLDRHLKAAGRGGLDVDASKLIWTPYKDQS.

A compositionally biased stretch (polar residues) spans 1–23 (MGSSANTETNGNAPPPSSNQKPP). A disordered region spans residues 1–58 (MGSSANTETNGNAPPPSSNQKPPATNGVDGSHPPPPPLTPDQAIIESDPSKKRKMGML). The 59-residue stretch at 60 to 118 (LEVGTRVMCRWRDGKHHPVKVIERRRIHNGGQNDYEYYVHYTEFNRRLDEWTQLDQLDL) folds into the Tudor-knot domain. One can recognise an MYST-type HAT domain in the interval 169–440 (TKVKNISTIE…VDASKLIWTP (272 aa)). Residues 202-227 (LFFCEFCLNFMKRKEQLQRHMRKCDL) form a C2HC MYST-type zinc finger. Lys-269 is modified (N6-acetyllysine; by autocatalysis). Acetyl-CoA contacts are provided by residues 312-314 (ILT) and 319-325 (QRKGYGK). The active-site Proton donor/acceptor is the Glu-345. Residue Ser-349 participates in acetyl-CoA binding.

This sequence belongs to the MYST (SAS/MOZ) family. Interacts with MRG1 and MRG2. In terms of processing, autoacetylation at Lys-269 is required for proper function. Expressed in cotyledons, leaves, stems, roots and, at higher levels in developing flowers, particularly in the anthers and gynoecia. Constitutively expressed in all tissues, predominantly in shoot apical meristem.

It is found in the nucleus. It carries out the reaction L-lysyl-[protein] + acetyl-CoA = N(6)-acetyl-L-lysyl-[protein] + CoA + H(+). Histone acetyltransferase which may be involved in transcriptional activation. Acetylates 'Lys-5' of histone H4 (H4K5ac). Essential for gametophyte development. Negative regulator of flowering controlling the H4K5ac levels in the FLC chromatin. The sequence is that of Histone acetyltransferase of the MYST family 2 from Arabidopsis thaliana (Mouse-ear cress).